The primary structure comprises 147 residues: Cytochrome c-type biogenesis protein CcmE (147 aa).

At 1 to 7 the chain is on the cytoplasmic side; it reads MKPRHKR. Residues 8 to 28 form a helical; Signal-anchor for type II membrane protein membrane-spanning segment; sequence AAIIAGGLAALGIAAYLVLNA. The Periplasmic segment spans residues 29 to 147; that stretch reads FQSNLVFFFS…QIQKTIKSLK (119 aa). Residues H121 and Y125 each coordinate heme.

The protein belongs to the CcmE/CycJ family.

Its subcellular location is the cell inner membrane. In terms of biological role, heme chaperone required for the biogenesis of c-type cytochromes. Transiently binds heme delivered by CcmC and transfers the heme to apo-cytochromes in a process facilitated by CcmF and CcmH. This chain is Cytochrome c-type biogenesis protein CcmE, found in Albidiferax ferrireducens (strain ATCC BAA-621 / DSM 15236 / T118) (Rhodoferax ferrireducens).